Reading from the N-terminus, the 533-residue chain is Conglutin beta 2 (533 aa).

Residues 1 to 30 (MGKMRVRFPTLVLVLGIVFLMAVSIGIAYG) form the signal peptide. The propeptide occupies 31–108 (EKDVLKSHER…EQQQGSPSYS (78 aa)). Basic and acidic residues-rich tracts occupy residues 37-51 (SHER…EWQP) and 79-99 (SGYE…REQE). Disordered stretches follow at residues 37–123 (SHER…QRFQ) and 315–337 (KHAQ…LRSN). 2 Cupin type-1 domains span residues 115-273 (YHFS…EEIQ) and 332-494 (FNLR…EDIE). N-linked (GlcNAc...) asparagine glycosylation is found at asparagine 363 and asparagine 444. The tract at residues 503–533 (SYFANGQPQQQQQQQSEKEGRRGRRGSSLPF) is disordered.

This sequence belongs to the 7S seed storage protein family. As to quaternary structure, multimers. Give rise to a complex array of processed forms, due to a large number of processing sites and changes in glycosylation.

In terms of biological role, seed storage protein. Accumulates during seed development and is hydrolyzed after germination to provide a carbon and nitrogen source for the developing seedling. Has a lectin-like activity. The protein is Conglutin beta 2 of Lupinus albus (White lupine).